Consider the following 288-residue polypeptide: Mycothiol S-conjugate amidase (288 aa).

Residues histidine 12, aspartate 15, and histidine 142 each coordinate Zn(2+).

It belongs to the MshB deacetylase family. Mca subfamily. Monomer. Zn(2+) serves as cofactor.

The catalysed reaction is mycothiol S-conjugate + H2O = an N-acetyl-L-cysteine-S-conjugate + 1D-myo-inositol 2-amino-2-deoxy-alpha-D-glucopyranoside. With respect to regulation, partially inhibited by MSH when MSmB (a bimane derivative of MSH) is used as substrate. Functionally, a mycothiol (MSH, N-acetyl-cysteinyl-glucosaminyl-inositol) S-conjugate amidase, it recycles conjugated MSH to the N-acetyl cysteine conjugate and the MSH precursor. Involved in MSH-dependent detoxification of a number of alkylating agents and antibiotics. Activity is specific for the mycothiol moiety. This chain is Mycothiol S-conjugate amidase, found in Mycolicibacterium smegmatis (strain ATCC 700084 / mc(2)155) (Mycobacterium smegmatis).